Here is an 85-residue protein sequence, read N- to C-terminus: Defensin-like protein 76 (85 aa).

Positions 1 to 27 (MQNQKHSHILTAITIVLLFAMAAKINA) are cleaved as a signal peptide. Intrachain disulfides connect Cys35/Cys70, Cys40/Cys59, Cys44/Cys68, and Cys48/Cys69.

It belongs to the DEFL family.

It is found in the secreted. The sequence is that of Defensin-like protein 76 (LCR86) from Arabidopsis thaliana (Mouse-ear cress).